Here is a 315-residue protein sequence, read N- to C-terminus: Intradiol ring-cleavage dioxygenase prcA (315 aa).

Fe cation is bound by residues Y166, Y200, H224, and H226. A disordered region spans residues 287-315 (KKHHPNPNSAPPVSSFERFNKASKTQEKL). Positions 304–315 (RFNKASKTQEKL) are enriched in basic and acidic residues.

Belongs to the intradiol ring-cleavage dioxygenase family. Homodimer. Fe(3+) serves as cofactor.

The enzyme catalyses 3,4-dihydroxybenzoate + O2 = 3-carboxy-cis,cis-muconate + 2 H(+). Intradiol ring-cleavage dioxygenase; part of the benzoic acid degradation pathway also known as the protocatechuic acid pathway. Benzoic acid debradation begins with the conversion of benzoic acid into 4-hydroxybenzoic acid through hydroxylation by the benzoate-4-monooxygenase bphA, and its partner NADPH-cytochrome P450 reductase cprA which act as a mediator in electron donation from NADPH. 4-Hydroxybenzoic acid is then converted into 3,4-dihydroxybenzoic acid (also called protocatechuic acid) by the p-hydroxybenzoate-m-hydroxylase phhA. Protocatechuic acid is converted into 3-carboxy-cis,cis-muconic acid by the intradiol ring-cleavage dioxygenase prcA, which is further metabolized through the 3-oxoadipate pathway to finally enter the tricarboxylic acid cycle (TCA). This Aspergillus niger (strain ATCC MYA-4892 / CBS 513.88 / FGSC A1513) protein is Intradiol ring-cleavage dioxygenase prcA.